The following is a 140-amino-acid chain: Large-conductance mechanosensitive channel (140 aa).

2 consecutive transmembrane segments (helical) span residues 21 to 41 and 82 to 102; these read VGVI…GDVI and GSFI…FMMI.

This sequence belongs to the MscL family. Homopentamer.

The protein localises to the cell inner membrane. Functionally, channel that opens in response to stretch forces in the membrane lipid bilayer. May participate in the regulation of osmotic pressure changes within the cell. The polypeptide is Large-conductance mechanosensitive channel (Leptothrix cholodnii (strain ATCC 51168 / LMG 8142 / SP-6) (Leptothrix discophora (strain SP-6))).